The sequence spans 465 residues: MKSVIFTEEKNLQRQNPLQKSEQQRRNFEMPSPPTTTSLSVTQTINGSHSFTIKGYSLAKGIGIGKHIASDTFTVGGYQWAIYFYPDGKNPEDNSAYVSVFIALASDGTDVRALFELSLLDQSGKGKHKVHSHFDRALESGPYTLKYRGSMWGYKRFFRRLMLETSDFLKDDCLKINCTVGVVVSEIDCPRLHSIHVPASDIGSHFGMLLENEDGSDITFNVSGEKFRAHRLVLAARSPVFESEFLDVTGEEDRDIEVTDMEPKVFKALLHYIYKDALIEDAESSSSSGSSVGPSASDTLAAKLLGAADKYKLPRLSLMCESVLCKDISVDSVANILALADRYNASALKSVCLKFAAENLIAVMRSDGFDYLREHCPSLQSELLKTVAGCEEELSGGGGKTRSVWGQFSDGGAETNGRQAQTWGDINGGAERSQSVWVEVVNANGSGRNNNDNNNSDDPMAELED.

Residues Leu-12–Ser-40 are disordered. One can recognise an MATH domain in the interval Asn-46 to Val-180. The BTB domain maps to Ser-216–Ala-282. Disordered regions lie at residues Ser-395–Gly-429 and Val-441–Asp-465. Over residues Asn-442–Asp-458 the composition is skewed to low complexity.

The protein belongs to the Tdpoz family. In terms of assembly, interacts with RAP2-4. Binds to MYB56 at the promoter of FLOWERING LOCUS T (FT). In terms of tissue distribution, ubiquitous.

The protein localises to the cytoplasm. Its pathway is protein modification; protein ubiquitination. Its function is as follows. May act as a substrate-specific adapter of an E3 ubiquitin-protein ligase complex (CUL3-RBX1-BTB) which mediates the ubiquitination and subsequent proteasomal degradation of target proteins. This Arabidopsis thaliana (Mouse-ear cress) protein is BTB/POZ and MATH domain-containing protein 4 (BPM4).